A 249-amino-acid polypeptide reads, in one-letter code: Phosphate import ATP-binding protein PstB 3 (249 aa).

In terms of domain architecture, ABC transporter spans 4 to 244 (LVINNLDLYY…PQDERTENYI (241 aa)). Residue 36–43 (GPSGCGKS) participates in ATP binding.

This sequence belongs to the ABC transporter superfamily. Phosphate importer (TC 3.A.1.7) family. As to quaternary structure, the complex is composed of two ATP-binding proteins (PstB), two transmembrane proteins (PstC and PstA) and a solute-binding protein (PstS).

The protein resides in the cell membrane. The catalysed reaction is phosphate(out) + ATP + H2O = ADP + 2 phosphate(in) + H(+). Part of the ABC transporter complex PstSACB involved in phosphate import. Responsible for energy coupling to the transport system. In Streptococcus agalactiae serotype Ia (strain ATCC 27591 / A909 / CDC SS700), this protein is Phosphate import ATP-binding protein PstB 3.